Consider the following 243-residue polypeptide: Orotidine 5'-phosphate decarboxylase (243 aa).

Substrate is bound by residues Asp12, Lys34, 61–70, Thr125, Arg187, Gln196, Gly216, and Arg217; that span reads DLKFHDIPNT. Lys63 functions as the Proton donor in the catalytic mechanism.

It belongs to the OMP decarboxylase family. Type 1 subfamily. Homodimer.

The catalysed reaction is orotidine 5'-phosphate + H(+) = UMP + CO2. It participates in pyrimidine metabolism; UMP biosynthesis via de novo pathway; UMP from orotate: step 2/2. Functionally, catalyzes the decarboxylation of orotidine 5'-monophosphate (OMP) to uridine 5'-monophosphate (UMP). This is Orotidine 5'-phosphate decarboxylase from Heliobacterium modesticaldum (strain ATCC 51547 / Ice1).